A 433-amino-acid chain; its full sequence is Urokinase-type plasminogen activator (433 aa).

The first 20 residues, Met-1 to Gly-20, serve as a signal peptide directing secretion. One can recognise an EGF-like domain in the interval Asp-28–Glu-64. Intrachain disulfides connect Cys-32/Cys-40, Cys-34/Cys-52, Cys-54/Cys-63, Cys-71/Cys-152, Cys-92/Cys-134, and Cys-123/Cys-147. The tract at residues Gln-35 to Phe-58 is binds urokinase plasminogen activator surface receptor. One can recognise a Kringle domain in the interval Cys-71–Cys-152. The tract at residues Ser-153 to Lys-179 is connecting peptide. Phosphoserine is present on Ser-159. 6 cysteine pairs are disulfide-bonded: Cys-169–Cys-301, Cys-211–Cys-227, Cys-219–Cys-290, Cys-315–Cys-384, Cys-347–Cys-363, and Cys-374–Cys-402. The Peptidase S1 domain occupies Ile-180 to Gly-426. Catalysis depends on charge relay system residues His-226 and Asp-277. Ser-378 acts as the Charge relay system in catalysis.

The protein belongs to the peptidase S1 family. Found in high and low molecular mass forms. Each consists of two chains, A and B. The high molecular mass form contains a long chain A which is cleaved to yield a short chain A. Forms heterodimer with SERPINA5. Binds LRP1B; binding is followed by internalization and degradation. Interacts with MRC2. Interacts with PLAUR. In complex with SERPINE1, interacts with PLAUR/uPAR. Interacts with SORL1 and LRP1, either alone or in complex with SERPINE1; these interactions are abolished in the presence of LRPAP1/RAP. The ternary complex composed of PLAUR-PLAU-PAI1 also interacts with SORLA. In terms of processing, produced as an inactive single-chain protein (pro-uPA or sc-uPA), is processed into the active disulfide-linked two-chain form of PLAU/uPA by a proteolytic event mediated, at least, by TMPRSS4.

Its subcellular location is the secreted. It carries out the reaction Specific cleavage of Arg-|-Val bond in plasminogen to form plasmin.. Inhibited by SERPINA5. Inhibited by SERPINE1. Specifically cleaves the zymogen plasminogen to form the active enzyme plasmin. The polypeptide is Urokinase-type plasminogen activator (Plau) (Mus musculus (Mouse)).